Reading from the N-terminus, the 438-residue chain is Exodeoxyribonuclease 7 large subunit (438 aa).

The segment at 406–438 is disordered; sequence ATSTGPTDDIPSSAARLPASPAPDARPASGPES.

The protein belongs to the XseA family. In terms of assembly, heterooligomer composed of large and small subunits.

The protein localises to the cytoplasm. It carries out the reaction Exonucleolytic cleavage in either 5'- to 3'- or 3'- to 5'-direction to yield nucleoside 5'-phosphates.. Functionally, bidirectionally degrades single-stranded DNA into large acid-insoluble oligonucleotides, which are then degraded further into small acid-soluble oligonucleotides. This is Exodeoxyribonuclease 7 large subunit from Clavibacter sepedonicus (Clavibacter michiganensis subsp. sepedonicus).